The following is a 1272-amino-acid chain: AF4/FMR2 family member 2 (1272 aa).

2 disordered regions span residues 93-183 (IPKN…LTQD) and 200-223 (PQIG…SSGE). Polar residues predominate over residues 97–107 (SVPQNPNNKNE). Residues 151–160 (SKPEWSRDSH) show a composition bias toward basic and acidic residues. The segment covering 161-183 (NPSTVLASQASGQPNKMQTLTQD) has biased composition (polar residues). Residues 212 to 223 (AKEDSNPKSSGE) are compositionally biased toward basic and acidic residues. A Phosphoserine modification is found at Ser-391. 4 disordered regions span residues 418–491 (KAKP…KWQL), 535–687 (TNAS…DQEE), 779–829 (SLHA…PEKK), and 842–903 (PPCI…QDKN). The segment covering 426 to 438 (VNPPLATPQPPPA) has biased composition (pro residues). Residues 439–452 (VQASGGSGSSSESE) are compositionally biased toward low complexity. At Thr-478 the chain carries Phosphothreonine. A compositionally biased stretch (basic and acidic residues) spans 543 to 558 (EPKERPLLSLIREKAR). A compositionally biased stretch (polar residues) spans 576–586 (STTSETVSQRT). Over residues 616–629 (PKEKESVELHDPPR) the composition is skewed to basic and acidic residues. Basic residues predominate over residues 630–640 (GRNKATAHKPA). Residues 818–829 (PTEVAEKIPEKK) show a composition bias toward basic and acidic residues. 2 stretches are compositionally biased toward pro residues: residues 844 to 853 (CISPAPPHKP) and 874 to 883 (FPPPLSPLPE).

It belongs to the AF4 family.

Its subcellular location is the nucleus speckle. Its function is as follows. RNA-binding protein. Might be involved in alternative splicing regulation through an interaction with G-quartet RNA structure. The protein is AF4/FMR2 family member 2 (AFF2) of Pongo pygmaeus (Bornean orangutan).